A 404-amino-acid chain; its full sequence is S-adenosylmethionine synthase (404 aa).

Residue 139 to 144 (GKGSSD) coordinates ATP.

It belongs to the AdoMet synthase 2 family. Mg(2+) serves as cofactor.

It carries out the reaction L-methionine + ATP + H2O = S-adenosyl-L-methionine + phosphate + diphosphate. It participates in amino-acid biosynthesis; S-adenosyl-L-methionine biosynthesis; S-adenosyl-L-methionine from L-methionine: step 1/1. Functionally, catalyzes the formation of S-adenosylmethionine from methionine and ATP. The protein is S-adenosylmethionine synthase of Saccharolobus solfataricus (strain ATCC 35092 / DSM 1617 / JCM 11322 / P2) (Sulfolobus solfataricus).